A 101-amino-acid chain; its full sequence is Large ribosomal subunit protein uL23 (101 aa).

This sequence belongs to the universal ribosomal protein uL23 family. In terms of assembly, part of the 50S ribosomal subunit. Contacts protein L29, and trigger factor when it is bound to the ribosome.

One of the early assembly proteins it binds 23S rRNA. One of the proteins that surrounds the polypeptide exit tunnel on the outside of the ribosome. Forms the main docking site for trigger factor binding to the ribosome. This is Large ribosomal subunit protein uL23 from Histophilus somni (strain 129Pt) (Haemophilus somnus).